The sequence spans 299 residues: tRNA uridine(34) hydroxylase (299 aa).

Positions 132–226 constitute a Rhodanese domain; sequence AGRPVVMLDT…YFEEVGGAHY (95 aa). Cysteine 186 (cysteine persulfide intermediate) is an active-site residue.

This sequence belongs to the TrhO family.

The catalysed reaction is uridine(34) in tRNA + AH2 + O2 = 5-hydroxyuridine(34) in tRNA + A + H2O. Its function is as follows. Catalyzes oxygen-dependent 5-hydroxyuridine (ho5U) modification at position 34 in tRNAs. This chain is tRNA uridine(34) hydroxylase, found in Burkholderia pseudomallei (strain 1106a).